A 267-amino-acid polypeptide reads, in one-letter code: Ribosomal RNA small subunit methyltransferase A (267 aa).

S-adenosyl-L-methionine is bound by residues asparagine 18, leucine 20, glycine 45, glutamate 66, aspartate 91, and asparagine 112.

It belongs to the class I-like SAM-binding methyltransferase superfamily. rRNA adenine N(6)-methyltransferase family. RsmA subfamily.

The protein localises to the cytoplasm. The enzyme catalyses adenosine(1518)/adenosine(1519) in 16S rRNA + 4 S-adenosyl-L-methionine = N(6)-dimethyladenosine(1518)/N(6)-dimethyladenosine(1519) in 16S rRNA + 4 S-adenosyl-L-homocysteine + 4 H(+). Its function is as follows. Specifically dimethylates two adjacent adenosines (A1518 and A1519) in the loop of a conserved hairpin near the 3'-end of 16S rRNA in the 30S particle. May play a critical role in biogenesis of 30S subunits. In Shewanella woodyi (strain ATCC 51908 / MS32), this protein is Ribosomal RNA small subunit methyltransferase A.